Here is a 297-residue protein sequence, read N- to C-terminus: tRNA (guanine-N(7)-)-methyltransferase (297 aa).

S-adenosyl-L-methionine-binding residues include Glu-22, Glu-47, Asp-74, and Asp-97. Asp-97 is an active-site residue. Residues Lys-101, Asp-133, and 165–168 (TKYE) contribute to the substrate site.

It belongs to the class I-like SAM-binding methyltransferase superfamily. TrmB family.

The enzyme catalyses guanosine(46) in tRNA + S-adenosyl-L-methionine = N(7)-methylguanosine(46) in tRNA + S-adenosyl-L-homocysteine. Its pathway is tRNA modification; N(7)-methylguanine-tRNA biosynthesis. Its function is as follows. Catalyzes the formation of N(7)-methylguanine at position 46 (m7G46) in tRNA. The chain is tRNA (guanine-N(7)-)-methyltransferase from Aquifex aeolicus (strain VF5).